A 646-amino-acid chain; its full sequence is Threonine--tRNA ligase (646 aa).

The region spanning 1–63 is the TGS domain; that stretch reads MAQISLTFPD…ETDAKIAIHT (63 aa). A catalytic region spans residues 247–544; it reads DHRKLGREME…LIENYAGKLP (298 aa). Residues Cys344, His395, and His521 each coordinate Zn(2+).

It belongs to the class-II aminoacyl-tRNA synthetase family. In terms of assembly, homodimer. The cofactor is Zn(2+).

The protein localises to the cytoplasm. The enzyme catalyses tRNA(Thr) + L-threonine + ATP = L-threonyl-tRNA(Thr) + AMP + diphosphate + H(+). Catalyzes the attachment of threonine to tRNA(Thr) in a two-step reaction: L-threonine is first activated by ATP to form Thr-AMP and then transferred to the acceptor end of tRNA(Thr). Also edits incorrectly charged L-seryl-tRNA(Thr). The chain is Threonine--tRNA ligase from Cereibacter sphaeroides (strain ATCC 17023 / DSM 158 / JCM 6121 / CCUG 31486 / LMG 2827 / NBRC 12203 / NCIMB 8253 / ATH 2.4.1.) (Rhodobacter sphaeroides).